The primary structure comprises 312 residues: 2,3-dihydroxyphenylpropionate/2,3-dihydroxicinnamic acid 1,2-dioxygenase (312 aa).

His-115 (proton donor) is an active-site residue. His-179 functions as the Proton acceptor in the catalytic mechanism.

Belongs to the LigB/MhpB extradiol dioxygenase family. In terms of assembly, homotetramer. Requires Fe(2+) as cofactor.

It carries out the reaction 3-(2,3-dihydroxyphenyl)propanoate + O2 = (2Z,4E)-2-hydroxy-6-oxonona-2,4-dienedioate + H(+). The enzyme catalyses (2E)-3-(2,3-dihydroxyphenyl)prop-2-enoate + O2 = (2Z,4E,7E)-2-hydroxy-6-oxonona-2,4,7-trienedioate + H(+). The protein operates within aromatic compound metabolism; 3-phenylpropanoate degradation. Its function is as follows. Catalyzes the non-heme iron(II)-dependent oxidative cleavage of 2,3-dihydroxyphenylpropionic acid and 2,3-dihydroxicinnamic acid into 2-hydroxy-6-ketononadienedioate and 2-hydroxy-6-ketononatrienedioate, respectively. This chain is 2,3-dihydroxyphenylpropionate/2,3-dihydroxicinnamic acid 1,2-dioxygenase, found in Mycolicibacterium paratuberculosis (strain ATCC BAA-968 / K-10) (Mycobacterium paratuberculosis).